Reading from the N-terminus, the 382-residue chain is ATP phosphoribosyltransferase regulatory subunit (382 aa).

It belongs to the class-II aminoacyl-tRNA synthetase family. HisZ subfamily. Heteromultimer composed of HisG and HisZ subunits.

It is found in the cytoplasm. It participates in amino-acid biosynthesis; L-histidine biosynthesis; L-histidine from 5-phospho-alpha-D-ribose 1-diphosphate: step 1/9. In terms of biological role, required for the first step of histidine biosynthesis. May allow the feedback regulation of ATP phosphoribosyltransferase activity by histidine. This Burkholderia cenocepacia (strain ATCC BAA-245 / DSM 16553 / LMG 16656 / NCTC 13227 / J2315 / CF5610) (Burkholderia cepacia (strain J2315)) protein is ATP phosphoribosyltransferase regulatory subunit.